The sequence spans 343 residues: Dihydroorotate dehydrogenase (quinone) (343 aa).

FMN contacts are provided by residues 61–65 and Thr85; that span reads AGLDK. A substrate-binding site is contributed by Lys65. Substrate is bound at residue 110–114; that stretch reads NRMGF. FMN is bound by residues Asn138 and Asn171. Substrate is bound at residue Asn171. Ser174 (nucleophile) is an active-site residue. Residue Asn176 participates in substrate binding. The FMN site is built by Lys216 and Thr244. 245 to 246 provides a ligand contact to substrate; sequence NT. Residues Gly267, Gly296, and 317-318 each bind FMN; that span reads YS.

This sequence belongs to the dihydroorotate dehydrogenase family. Type 2 subfamily. As to quaternary structure, monomer. FMN serves as cofactor.

The protein localises to the cell membrane. It catalyses the reaction (S)-dihydroorotate + a quinone = orotate + a quinol. It participates in pyrimidine metabolism; UMP biosynthesis via de novo pathway; orotate from (S)-dihydroorotate (quinone route): step 1/1. Functionally, catalyzes the conversion of dihydroorotate to orotate with quinone as electron acceptor. The chain is Dihydroorotate dehydrogenase (quinone) from Pseudomonas savastanoi pv. phaseolicola (strain 1448A / Race 6) (Pseudomonas syringae pv. phaseolicola (strain 1448A / Race 6)).